The chain runs to 183 residues: MARRGQQPPQQQQQAQPAQKNQAGKFNPAEFVKPGLTEEEVLEIKEAFDLFDTDGTQSIDPKELKAAMTSLGFEAKNQTIYQMISDLDTDGSGQIDFAEFLKLMTARISERDSKADIQKVFNLFDSERAGFITLKDLRKVAKELGETMDDSELQEMIDRADSDGDTQVTFEDFYNIMTKKTFA.

Over residues 1 to 19 (MARRGQQPPQQQQQAQPAQ) the composition is skewed to low complexity. The interval 1–30 (MARRGQQPPQQQQQAQPAQKNQAGKFNPAE) is disordered. 4 EF-hand domains span residues 39 to 74 (EEVLEIKEAFDLFDTDGTQSIDPKELKAAMTSLGFE), 75 to 110 (AKNQTIYQMISDLDTDGSGQIDFAEFLKLMTARISE), 112 to 147 (DSKADIQKVFNLFDSERAGFITLKDLRKVAKELGET), and 148 to 183 (MDDSELQEMIDRADSDGDTQVTFEDFYNIMTKKTFA). Positions 52, 54, 56, 58, 63, 88, 90, 92, 94, and 99 each coordinate Ca(2+).

Belongs to the centrin family. In terms of assembly, monomer.

The protein resides in the cytoplasm. Its subcellular location is the cytoskeleton. In terms of biological role, plays a fundamental role in microtubule organizing center structure and function. Component of the infraciliary lattice (ICL) and the ciliary basal bodies. The protein is Caltractin ICL1f (Icl1f) of Paramecium tetraurelia.